We begin with the raw amino-acid sequence, 23 residues long: Coenzyme PQQ synthesis protein A (23 aa).

The segment at residues E15 to Y19 is a cross-link (pyrroloquinoline quinone (Glu-Tyr)).

The protein belongs to the PqqA family.

It functions in the pathway cofactor biosynthesis; pyrroloquinoline quinone biosynthesis. Functionally, required for coenzyme pyrroloquinoline quinone (PQQ) biosynthesis. PQQ is probably formed by cross-linking a specific glutamate to a specific tyrosine residue and excising these residues from the peptide. This chain is Coenzyme PQQ synthesis protein A, found in Ectopseudomonas mendocina (strain ymp) (Pseudomonas mendocina).